The primary structure comprises 290 residues: Small ribosomal subunit biogenesis GTPase RsgA (290 aa).

One can recognise a CP-type G domain in the interval 61–218 (KSELVRPTVA…IVDTPGFSTL (158 aa)). GTP contacts are provided by residues 110–113 (NKID) and 161–169 (GPSGAGKST). 4 residues coordinate Zn(2+): Cys243, Cys248, His250, and Cys256.

This sequence belongs to the TRAFAC class YlqF/YawG GTPase family. RsgA subfamily. Monomer. Associates with 30S ribosomal subunit, binds 16S rRNA. Requires Zn(2+) as cofactor.

Its subcellular location is the cytoplasm. In terms of biological role, one of several proteins that assist in the late maturation steps of the functional core of the 30S ribosomal subunit. Helps release RbfA from mature subunits. May play a role in the assembly of ribosomal proteins into the subunit. Circularly permuted GTPase that catalyzes slow GTP hydrolysis, GTPase activity is stimulated by the 30S ribosomal subunit. This is Small ribosomal subunit biogenesis GTPase RsgA from Clostridium beijerinckii (strain ATCC 51743 / NCIMB 8052) (Clostridium acetobutylicum).